The chain runs to 300 residues: Porphobilinogen deaminase (300 aa).

C243 carries the post-translational modification S-(dipyrrolylmethanemethyl)cysteine.

The protein belongs to the HMBS family. Monomer. Dipyrromethane is required as a cofactor.

The enzyme catalyses 4 porphobilinogen + H2O = hydroxymethylbilane + 4 NH4(+). It functions in the pathway porphyrin-containing compound metabolism; protoporphyrin-IX biosynthesis; coproporphyrinogen-III from 5-aminolevulinate: step 2/4. Functionally, tetrapolymerization of the monopyrrole PBG into the hydroxymethylbilane pre-uroporphyrinogen in several discrete steps. The polypeptide is Porphobilinogen deaminase (Clostridium novyi (strain NT)).